Consider the following 85-residue polypeptide: Cell division topological specificity factor (85 aa).

This sequence belongs to the MinE family.

Functionally, prevents the cell division inhibition by proteins MinC and MinD at internal division sites while permitting inhibition at polar sites. This ensures cell division at the proper site by restricting the formation of a division septum at the midpoint of the long axis of the cell. The sequence is that of Cell division topological specificity factor from Deinococcus geothermalis (strain DSM 11300 / CIP 105573 / AG-3a).